The primary structure comprises 307 residues: Recombination-associated protein RdgC (307 aa).

This sequence belongs to the RdgC family.

The protein localises to the cytoplasm. It localises to the nucleoid. Functionally, may be involved in recombination. The protein is Recombination-associated protein RdgC of Burkholderia orbicola (strain MC0-3).